The sequence spans 159 residues: Putative 4-hydroxy-4-methyl-2-oxoglutarate aldolase (159 aa).

Substrate contacts are provided by residues 78–81 (GDVI) and R100. Position 101 (D101) interacts with a divalent metal cation.

The protein belongs to the class II aldolase/RraA-like family. Homotrimer. The cofactor is a divalent metal cation.

The catalysed reaction is 4-hydroxy-4-methyl-2-oxoglutarate = 2 pyruvate. It catalyses the reaction oxaloacetate + H(+) = pyruvate + CO2. Catalyzes the aldol cleavage of 4-hydroxy-4-methyl-2-oxoglutarate (HMG) into 2 molecules of pyruvate. Also contains a secondary oxaloacetate (OAA) decarboxylase activity due to the common pyruvate enolate transition state formed following C-C bond cleavage in the retro-aldol and decarboxylation reactions. The sequence is that of Putative 4-hydroxy-4-methyl-2-oxoglutarate aldolase from Mycobacterium sp. (strain KMS).